Here is a 955-residue protein sequence, read N- to C-terminus: 2-oxoglutarate dehydrogenase E1 component (955 aa).

It belongs to the alpha-ketoglutarate dehydrogenase family. In terms of assembly, homodimer. Part of the 2-oxoglutarate dehydrogenase (OGDH) complex composed of E1 (2-oxoglutarate dehydrogenase), E2 (dihydrolipoamide succinyltransferase) and E3 (dihydrolipoamide dehydrogenase); the complex contains multiple copies of the three enzymatic components (E1, E2 and E3). Thiamine diphosphate serves as cofactor.

It carries out the reaction N(6)-[(R)-lipoyl]-L-lysyl-[protein] + 2-oxoglutarate + H(+) = N(6)-[(R)-S(8)-succinyldihydrolipoyl]-L-lysyl-[protein] + CO2. Its function is as follows. E1 component of the 2-oxoglutarate dehydrogenase (OGDH) complex which catalyzes the decarboxylation of 2-oxoglutarate, the first step in the conversion of 2-oxoglutarate to succinyl-CoA and CO(2). This chain is 2-oxoglutarate dehydrogenase E1 component, found in Bacillus cereus (strain G9842).